Consider the following 114-residue polypeptide: Kininogen-2 (114 aa).

The signal sequence occupies residues 1–23 (MRLWFCLSFFIVLCLEHFPGTLA). The segment covering 35–45 (TRLHGHHKPSR) has biased composition (basic residues). The interval 35–114 (TRLHGHHKPS…QIPGLGPLRG (80 aa)) is disordered. Over residues 65 to 80 (PESEEKTEQFLRDLPK) the composition is skewed to basic and acidic residues. Arg113 bears the Arginine amide mark.

It belongs to the bradykinin-related peptide family. As to expression, expressed by the skin glands.

It is found in the secreted. Its function is as follows. Potent vasodilator. Binds B1 (BDKRB1) and B2 (BDKRB2) bradykinin receptors. The protein is Kininogen-2 of Bombina maxima (Giant fire-bellied toad).